The primary structure comprises 455 residues: Argininosuccinate lyase (455 aa).

Belongs to the lyase 1 family. Argininosuccinate lyase subfamily.

The protein localises to the cytoplasm. The catalysed reaction is 2-(N(omega)-L-arginino)succinate = fumarate + L-arginine. It functions in the pathway amino-acid biosynthesis; L-arginine biosynthesis; L-arginine from L-ornithine and carbamoyl phosphate: step 3/3. The chain is Argininosuccinate lyase from Caulobacter vibrioides (strain ATCC 19089 / CIP 103742 / CB 15) (Caulobacter crescentus).